The following is a 159-amino-acid chain: Putative 4-hydroxy-4-methyl-2-oxoglutarate aldolase (159 aa).

Residues 74–77 (GDNL) and Arg96 each bind substrate. A divalent metal cation is bound at residue Asp97.

This sequence belongs to the class II aldolase/RraA-like family. Homotrimer. The cofactor is a divalent metal cation.

The enzyme catalyses 4-hydroxy-4-methyl-2-oxoglutarate = 2 pyruvate. It carries out the reaction oxaloacetate + H(+) = pyruvate + CO2. Functionally, catalyzes the aldol cleavage of 4-hydroxy-4-methyl-2-oxoglutarate (HMG) into 2 molecules of pyruvate. Also contains a secondary oxaloacetate (OAA) decarboxylase activity due to the common pyruvate enolate transition state formed following C-C bond cleavage in the retro-aldol and decarboxylation reactions. This chain is Putative 4-hydroxy-4-methyl-2-oxoglutarate aldolase, found in Bacillus anthracis.